The primary structure comprises 172 residues: 3-hydroxydecanoyl-[acyl-carrier-protein] dehydratase (172 aa).

H71 is an active-site residue.

The protein belongs to the thioester dehydratase family. FabA subfamily. In terms of assembly, homodimer.

Its subcellular location is the cytoplasm. The enzyme catalyses a (3R)-hydroxyacyl-[ACP] = a (2E)-enoyl-[ACP] + H2O. It carries out the reaction (3R)-hydroxydecanoyl-[ACP] = (2E)-decenoyl-[ACP] + H2O. It catalyses the reaction (2E)-decenoyl-[ACP] = (3Z)-decenoyl-[ACP]. The protein operates within lipid metabolism; fatty acid biosynthesis. Necessary for the introduction of cis unsaturation into fatty acids. Catalyzes the dehydration of (3R)-3-hydroxydecanoyl-ACP to E-(2)-decenoyl-ACP and then its isomerization to Z-(3)-decenoyl-ACP. Can catalyze the dehydratase reaction for beta-hydroxyacyl-ACPs with saturated chain lengths up to 16:0, being most active on intermediate chain length. In Vibrio parahaemolyticus serotype O3:K6 (strain RIMD 2210633), this protein is 3-hydroxydecanoyl-[acyl-carrier-protein] dehydratase.